A 360-amino-acid polypeptide reads, in one-letter code: Alanine racemase (360 aa).

Residue Lys-33 is the Proton acceptor; specific for D-alanine of the active site. At Lys-33 the chain carries N6-(pyridoxal phosphate)lysine. Arg-129 lines the substrate pocket. Tyr-253 functions as the Proton acceptor; specific for L-alanine in the catalytic mechanism. Met-301 is a substrate binding site.

Belongs to the alanine racemase family. It depends on pyridoxal 5'-phosphate as a cofactor.

The catalysed reaction is L-alanine = D-alanine. Its pathway is amino-acid biosynthesis; D-alanine biosynthesis; D-alanine from L-alanine: step 1/1. In terms of biological role, catalyzes the interconversion of L-alanine and D-alanine. May also act on other amino acids. This Xanthomonas campestris pv. campestris (strain 8004) protein is Alanine racemase (alr).